The sequence spans 210 residues: Redox-sensing transcriptional repressor Rex (210 aa).

The H-T-H motif DNA-binding region spans 15–54; sequence LYYRIFKRFNTDGIEKASSKQIADALGIDSATVRRDFSYF. 89-94 contacts NAD(+); sequence GCGNIG.

This sequence belongs to the transcriptional regulatory Rex family. In terms of assembly, homodimer.

The protein localises to the cytoplasm. Modulates transcription in response to changes in cellular NADH/NAD(+) redox state. This chain is Redox-sensing transcriptional repressor Rex, found in Streptococcus agalactiae serotype Ia (strain ATCC 27591 / A909 / CDC SS700).